Reading from the N-terminus, the 366-residue chain is Chalcone synthase B (366 aa).

Residue cysteine 172 is part of the active site.

It belongs to the thiolase-like superfamily. Chalcone/stilbene synthases family.

It carries out the reaction (E)-4-coumaroyl-CoA + 3 malonyl-CoA + 3 H(+) = 2',4,4',6'-tetrahydroxychalcone + 3 CO2 + 4 CoA. The protein operates within secondary metabolite biosynthesis; flavonoid biosynthesis. The primary product of this enzyme is 4,2',4',6'-tetrahydroxychalcone (also termed naringenin-chalcone or chalcone) which can under specific conditions spontaneously isomerize into naringenin. This is Chalcone synthase B (CHSB) from Ipomoea trifida (Morning glory).